The primary structure comprises 449 residues: 23S rRNA (uracil(1939)-C(5))-methyltransferase RlmD (449 aa).

The region spanning 1–66 (MGRSRHHNKL…AKFDEAKVVE (66 aa)) is the TRAM domain. Cys79, Cys85, Cys88, and Cys169 together coordinate [4Fe-4S] cluster. S-adenosyl-L-methionine contacts are provided by Gln280, Phe309, Asn314, Glu330, Asn357, and Asp379. The Nucleophile role is filled by Cys405.

It belongs to the class I-like SAM-binding methyltransferase superfamily. RNA M5U methyltransferase family. RlmD subfamily.

The enzyme catalyses uridine(1939) in 23S rRNA + S-adenosyl-L-methionine = 5-methyluridine(1939) in 23S rRNA + S-adenosyl-L-homocysteine + H(+). Its function is as follows. Catalyzes the formation of 5-methyl-uridine at position 1939 (m5U1939) in 23S rRNA. This chain is 23S rRNA (uracil(1939)-C(5))-methyltransferase RlmD, found in Francisella tularensis subsp. tularensis (strain FSC 198).